A 345-amino-acid chain; its full sequence is Platelet-derived growth factor C (345 aa).

The first 22 residues, 1 to 22 (MLLLGLLLLTSALAGRRHGAAA), serve as a signal peptide directing secretion. Positions 46–163 (HEKIITVTSN…PGFCIHYTLL (118 aa)) constitute a CUB domain. Asparagine 55 carries an N-linked (GlcNAc...) asparagine glycan. 4 disulfide bridges follow: cysteine 104-cysteine 124, cysteine 250-cysteine 294, cysteine 280-cysteine 335, and cysteine 287-cysteine 337.

This sequence belongs to the PDGF/VEGF growth factor family. As to quaternary structure, homodimer; disulfide-linked. Interacts with PDGFRA homodimers, and with heterodimers formed by PDGFRA and PDGFRB. Proteolytic removal of the N-terminal CUB domain releasing the core domain is necessary for unmasking the receptor-binding epitopes of the core domain. Cleavage after basic residues in the hinge region (region connecting the CUB and growth factor domains) gives rise to the receptor-binding form.

The protein resides in the secreted. Its function is as follows. Growth factor that plays an essential role in the regulation of embryonic development, cell proliferation, cell migration, survival and chemotaxis. Potent mitogen and chemoattractant for cells of mesenchymal origin. Required for normal skeleton formation during embryonic development. Required for normal skin morphogenesis during embryonic development. Plays an important role in wound healing, in angiogenesis and blood vessel development. The protein is Platelet-derived growth factor C (PDGFC) of Gallus gallus (Chicken).